The sequence spans 281 residues: Large ribosomal subunit protein uL2 (281 aa).

A disordered region spans residues 215-281 (LGRRPHTRGV…RRNNRKDSKK (67 aa)). Residues 258–269 (KTRDNKSTDKFI) are compositionally biased toward basic and acidic residues. Basic residues predominate over residues 270 to 281 (VRRRNNRKDSKK).

This sequence belongs to the universal ribosomal protein uL2 family. In terms of assembly, part of the 50S ribosomal subunit. Forms a bridge to the 30S subunit in the 70S ribosome.

Functionally, one of the primary rRNA binding proteins. Required for association of the 30S and 50S subunits to form the 70S ribosome, for tRNA binding and peptide bond formation. It has been suggested to have peptidyltransferase activity; this is somewhat controversial. Makes several contacts with the 16S rRNA in the 70S ribosome. This chain is Large ribosomal subunit protein uL2, found in Pelagibacter ubique (strain HTCC1062).